We begin with the raw amino-acid sequence, 533 residues long: Di/tripeptide-binding protein 3 (533 aa).

The signal sequence occupies residues methionine 1 to alanine 24.

Belongs to the bacterial solute-binding protein 5 family. The complex is composed of two ATP-binding proteins (DppD and DppF), two transmembrane proteins (DppB and DppC) and a solute-binding protein (DppA3). Five orthologous SBPs (DppA1-A5) are present in P.aeruginosa, which increases the substrate specificity of the DppBCDF transporter.

Functionally, part of the ABC transporter DppABCDF involved in the uptake of various di/tripeptides. Prefers dipeptides with acidic residues at the C-terminal end. Involved in the uptake of phaseolotoxin, a toxic tripeptide inhibiting the enzyme ornithine carbamoyltransferase. The chain is Di/tripeptide-binding protein 3 from Pseudomonas aeruginosa (strain UCBPP-PA14).